A 634-amino-acid polypeptide reads, in one-letter code: Tyrosine-protein kinase transforming protein erbB (634 aa).

Positions 132–399 constitute a Protein kinase domain; it reads FKKVKVLGSG…KMARDPPRYL (268 aa). Residues 138–146 and Lys165 contribute to the ATP site; that span reads LGSGAFGTV. The active-site Proton acceptor is the Asp257.

It belongs to the protein kinase superfamily. Tyr protein kinase family. EGF receptor subfamily.

The enzyme catalyses L-tyrosyl-[protein] + ATP = O-phospho-L-tyrosyl-[protein] + ADP + H(+). The sequence is that of Tyrosine-protein kinase transforming protein erbB (V-ERBB) from Avian leukosis virus (ALV).